Consider the following 428-residue polypeptide: Putative F-box protein At3g22421 (428 aa).

The region spanning 4 to 50 (TTTISHLPTELLDEIISRVPLKSTRAVRLTCKNWDSLFKNRSFMKEE) is the F-box domain.

This Arabidopsis thaliana (Mouse-ear cress) protein is Putative F-box protein At3g22421.